The primary structure comprises 103 residues: Small ribosomal subunit protein uS10 (103 aa).

The protein belongs to the universal ribosomal protein uS10 family. In terms of assembly, part of the 30S ribosomal subunit.

Its function is as follows. Involved in the binding of tRNA to the ribosomes. In Alcanivorax borkumensis (strain ATCC 700651 / DSM 11573 / NCIMB 13689 / SK2), this protein is Small ribosomal subunit protein uS10.